The sequence spans 70 residues: MPGIRVKENEPFEVAIRRFKRTIEKTGVLTELRSREFYEKPTAERKRKLAAAVKRNHKRLRSQMLPPKLY.

This sequence belongs to the bacterial ribosomal protein bS21 family.

The sequence is that of Small ribosomal subunit protein bS21 from Azoarcus sp. (strain BH72).